The primary structure comprises 594 residues: Probable pectinesterase/pectinesterase inhibitor 33 (594 aa).

The N-terminal stretch at 1-22 (MLRGIFHICLLASFLLLPFSSA) is a signal peptide. Positions 28-75 (FTGGTDAPPPWDHNVSPPPETAPSPTPTSSPSTTSPPSPGPVAAPSPI) are disordered. The span at 34-71 (APPPWDHNVSPPPETAPSPTPTSSPSTTSPPSPGPVAA) shows a compositional bias: pro residues. N-linked (GlcNAc...) asparagine glycans are attached at residues Asn77, Asn170, Asn213, and Asn226. Residues 78–237 (GSVSGDMTWW…SDLIGNCLAV (160 aa)) form a pectinesterase inhibitor 33 region. The interval 280 to 581 (HLVVAQDRSG…TVGSLIAGGS (302 aa)) is pectinesterase 33. Residues Thr356 and Gln386 each contribute to the substrate site. Asp409 acts as the Proton donor; for pectinesterase activity in catalysis. Residues Cys423 and Cys443 are joined by a disulfide bond. The active-site Nucleophile; for pectinesterase activity is the Asp430. Residues Arg498 and Trp500 each coordinate substrate.

It in the N-terminal section; belongs to the PMEI family. This sequence in the C-terminal section; belongs to the pectinesterase family. In terms of tissue distribution, expressed in siliques.

The protein localises to the secreted. It is found in the cell wall. It carries out the reaction [(1-&gt;4)-alpha-D-galacturonosyl methyl ester](n) + n H2O = [(1-&gt;4)-alpha-D-galacturonosyl](n) + n methanol + n H(+). The protein operates within glycan metabolism; pectin degradation; 2-dehydro-3-deoxy-D-gluconate from pectin: step 1/5. Functionally, acts in the modification of cell walls via demethylesterification of cell wall pectin. The chain is Probable pectinesterase/pectinesterase inhibitor 33 (PME33) from Arabidopsis thaliana (Mouse-ear cress).